We begin with the raw amino-acid sequence, 381 residues long: (S)-scoulerine 9-O-methyltransferase (381 aa).

Gly223, Glu246, Asp266, Met267, and Lys280 together coordinate S-adenosyl-L-methionine. The active-site Proton acceptor is His284.

It belongs to the class I-like SAM-binding methyltransferase superfamily. Cation-independent O-methyltransferase family. COMT subfamily.

The enzyme catalyses (S)-scoulerine + S-adenosyl-L-methionine = (S)-tetrahydrocolumbamine + S-adenosyl-L-homocysteine + H(+). In terms of biological role, produces a precursor of protoberberine alkaloids. This is (S)-scoulerine 9-O-methyltransferase (SMT) from Coptis japonica (Japanese goldthread).